The chain runs to 179 residues: Large ribosomal subunit protein uL6 (179 aa).

It belongs to the universal ribosomal protein uL6 family. As to quaternary structure, part of the 50S ribosomal subunit.

Its function is as follows. This protein binds to the 23S rRNA, and is important in its secondary structure. It is located near the subunit interface in the base of the L7/L12 stalk, and near the tRNA binding site of the peptidyltransferase center. The polypeptide is Large ribosomal subunit protein uL6 (Nocardia farcinica (strain IFM 10152)).